Here is a 509-residue protein sequence, read N- to C-terminus: H/ACA ribonucleoprotein complex subunit DKC1 (509 aa).

Positions 1–25 (MADAEAAMTFPKKHKKKKERKPLPE) are disordered. Ala2 is modified (N-acetylalanine). Residues 2–22 (ADAEAAMTFPKKHKKKKERKP) are nucleolar localization. The segment covering 11–20 (PKKHKKKKER) has biased composition (basic residues). Residues Lys21, Lys40, and Lys44 each participate in a glycyl lysine isopeptide (Lys-Gly) (interchain with G-Cter in SUMO2) cross-link. The active-site Nucleophile is the Asp126. A Glycyl lysine isopeptide (Lys-Gly) (interchain with G-Cter in SUMO2) cross-link involves residue Lys192. Residues 297–372 (HKRLVMKDSA…VVAKIKRVIM (76 aa)) form the PUA domain. Positions 381–509 (WGLGPKASQK…KARAAEELSG (129 aa)) are disordered. Ser388 is subject to Phosphoserine. Glycyl lysine isopeptide (Lys-Gly) (interchain with G-Cter in SUMO2) cross-links involve residues Lys395 and Lys425. The span at 416 to 425 (DYVDYSDSSK) shows a compositional bias: basic and acidic residues. Positions 447 to 509 (KRKRDSDSDA…KARAAEELSG (63 aa)) are nuclear and nucleolar localization. Phosphoserine is present on residues Ser452 and Ser454. A Phosphothreonine modification is found at Thr460. A compositionally biased stretch (basic residues) spans 466–475 (RVKKEKKKKK). Positions 481-490 (GEEAAEDGDG) are enriched in acidic residues. Ser508 is subject to Phosphoserine.

It belongs to the pseudouridine synthase TruB family. Part of the H/ACA small nucleolar ribonucleoprotein (H/ACA snoRNP) complex, which contains NHP2/NOLA2, GAR1/NOLA1, NOP10/NOLA3, and DKC1/NOLA4, which is presumed to be the catalytic subunit. The complex contains a stable core formed by binding of one or two NOP10-DKC1 heterodimers to NHP2; GAR1 subsequently binds to this core via DKC1. The complex binds a box H/ACA small nucleolar RNA (snoRNA), which may target the specific site of modification within the RNA substrate. During assembly, the complex contains NAF1 instead of GAR1/NOLA1. The complex also interacts with TERC, which contains a 3'-terminal domain related to the box H/ACA snoRNAs. Specific interactions with snoRNAs or TERC are mediated by GAR1 and NHP2. Associates with NOLC1/NOPP140. H/ACA snoRNPs interact with the SMN complex, consisting of SMN1 or SMN2, GEMIN2/SIP1, DDX20/GEMIN3, and GEMIN4. This is mediated by interaction between GAR1 and SMN1 or SMN2. The SMN complex may be required for correct assembly of the H/ACA snoRNP complex. Component of the telomerase holoenzyme complex composed of one molecule of TERT, one molecule of WRAP53/TCAB1, two molecules of H/ACA ribonucleoprotein complex subunits DKC1, NOP10, NHP2 and GAR1, and a telomerase RNA template component (TERC). The telomerase holoenzyme complex is associated with TEP1, SMG6/EST1A and POT1. Interacts with SHQ1; this interaction may lead to the stabilization of DKC1, from the time of its synthesis until its association with NOP10, NHP2, and NAF1 at the nascent H/ACA RNA. Interacts with HMBOX1. Interacts with DHX36.

It is found in the nucleus. It localises to the nucleolus. Its subcellular location is the cajal body. It carries out the reaction uridine in 5S rRNA = pseudouridine in 5S rRNA. Functionally, catalytic subunit of H/ACA small nucleolar ribonucleoprotein (H/ACA snoRNP) complex, which catalyzes pseudouridylation of rRNA. This involves the isomerization of uridine such that the ribose is subsequently attached to C5, instead of the normal N1. Each rRNA can contain up to 100 pseudouridine ('psi') residues, which may serve to stabilize the conformation of rRNAs. Required for ribosome biogenesis and telomere maintenance. Also required for correct processing or intranuclear trafficking of TERC, the RNA component of the telomerase reverse transcriptase (TERT) holoenzyme. The protein is H/ACA ribonucleoprotein complex subunit DKC1 (Dkc1) of Rattus norvegicus (Rat).